Here is a 668-residue protein sequence, read N- to C-terminus: DNA ligase (668 aa).

NAD(+) is bound by residues 31 to 35, 80 to 81, and Glu111; these read DYDFD and SL. Residue Lys113 is the N6-AMP-lysine intermediate of the active site. Positions 134, 170, 285, and 309 each coordinate NAD(+). Cys403, Cys406, Cys421, and Cys427 together coordinate Zn(2+). One can recognise a BRCT domain in the interval 587 to 668; that stretch reads NATEKFIGKT…EFITKLNESE (82 aa).

It belongs to the NAD-dependent DNA ligase family. LigA subfamily. It depends on Mg(2+) as a cofactor. Mn(2+) is required as a cofactor.

The enzyme catalyses NAD(+) + (deoxyribonucleotide)n-3'-hydroxyl + 5'-phospho-(deoxyribonucleotide)m = (deoxyribonucleotide)n+m + AMP + beta-nicotinamide D-nucleotide.. Functionally, DNA ligase that catalyzes the formation of phosphodiester linkages between 5'-phosphoryl and 3'-hydroxyl groups in double-stranded DNA using NAD as a coenzyme and as the energy source for the reaction. It is essential for DNA replication and repair of damaged DNA. The protein is DNA ligase of Flavobacterium johnsoniae (strain ATCC 17061 / DSM 2064 / JCM 8514 / BCRC 14874 / CCUG 350202 / NBRC 14942 / NCIMB 11054 / UW101) (Cytophaga johnsonae).